We begin with the raw amino-acid sequence, 435 residues long: Enolase (435 aa).

Residue glutamine 163 participates in (2R)-2-phosphoglycerate binding. Glutamate 205 acts as the Proton donor in catalysis. Residues aspartate 243, glutamate 292, and aspartate 319 each coordinate Mg(2+). The (2R)-2-phosphoglycerate site is built by lysine 344, arginine 373, serine 374, and lysine 395. Lysine 344 functions as the Proton acceptor in the catalytic mechanism.

It belongs to the enolase family. Mg(2+) is required as a cofactor.

It localises to the cytoplasm. It is found in the secreted. Its subcellular location is the cell surface. It carries out the reaction (2R)-2-phosphoglycerate = phosphoenolpyruvate + H2O. Its pathway is carbohydrate degradation; glycolysis; pyruvate from D-glyceraldehyde 3-phosphate: step 4/5. In terms of biological role, catalyzes the reversible conversion of 2-phosphoglycerate (2-PG) into phosphoenolpyruvate (PEP). It is essential for the degradation of carbohydrates via glycolysis. This is Enolase from Streptococcus suis (strain 98HAH33).